A 185-amino-acid chain; its full sequence is Elongation factor P (185 aa).

It belongs to the elongation factor P family.

Its subcellular location is the cytoplasm. The protein operates within protein biosynthesis; polypeptide chain elongation. Functionally, involved in peptide bond synthesis. Stimulates efficient translation and peptide-bond synthesis on native or reconstituted 70S ribosomes in vitro. Probably functions indirectly by altering the affinity of the ribosome for aminoacyl-tRNA, thus increasing their reactivity as acceptors for peptidyl transferase. In Trichodesmium erythraeum (strain IMS101), this protein is Elongation factor P.